Consider the following 238-residue polypeptide: Enoyl-CoA delta isomerase 3 (238 aa).

This sequence belongs to the enoyl-CoA hydratase/isomerase family.

Its subcellular location is the cytoplasm. It localises to the nucleus. It carries out the reaction a (3Z)-enoyl-CoA = a 4-saturated (2E)-enoyl-CoA. The catalysed reaction is a (3E)-enoyl-CoA = a 4-saturated (2E)-enoyl-CoA. Its pathway is lipid metabolism; fatty acid beta-oxidation. Functionally, able to isomerize both 3-cis and 3-trans double bonds into the 2-trans form in a range of enoyl-CoA species. Essential for the beta oxidation of unsaturated fatty acids. This chain is Enoyl-CoA delta isomerase 3, found in Arabidopsis thaliana (Mouse-ear cress).